Consider the following 82-residue polypeptide: Protein Vpu (82 aa).

Topologically, residues 1–7 are extracellular; it reads MQPLQIS. A helical transmembrane segment spans residues 8-28; that stretch reads AIVALVVAAIIAIVVWSIALL. Residues 29–82 lie on the Cytoplasmic side of the membrane; sequence EYRKLLRQRKIDRLIDRIRERAEDSGNESEGDQEELSALVEMGGHDAPWDIDDL. Residues Ser-53 and Ser-57 each carry the phosphoserine; by host CK2 modification.

Belongs to the HIV-1 VPU protein family. Homopentamer. Interacts with host CD4 and BRTC; these interactions induce proteasomal degradation of CD4. Interacts with host BST2; this interaction leads to the degradation of host BST2. Interacts with host FBXW11. Interacts with host AP1M1; this interaction plays a role in the mistrafficking and subsequent degradation of host BST2. Interacts with host RANBP2; this interaction allows Vpu to down-regulate host BLM sumoylation. Phosphorylated by host CK2. This phosphorylation is necessary for interaction with human BTRC and degradation of CD4.

It is found in the host membrane. Ion channel activity is inhibited by hexamethylene amiloride in vitro. In terms of biological role, enhances virion budding by targeting host CD4 and Tetherin/BST2 to proteasome degradation. Degradation of CD4 prevents any unwanted premature interactions between viral Env and its host receptor CD4 in the endoplasmic reticulum. Degradation of antiretroviral protein Tetherin/BST2 is important for virion budding, as BST2 tethers new viral particles to the host cell membrane. Mechanistically, Vpu bridges either CD4 or BST2 to BTRC, a substrate recognition subunit of the Skp1/Cullin/F-box protein E3 ubiquitin ligase, induces their ubiquitination and subsequent proteasomal degradation. The alteration of the E3 ligase specificity by Vpu seems to promote the degradation of host IKBKB, leading to NF-kappa-B down-regulation and subsequent apoptosis. Acts as a viroporin that forms an oligomeric ion channel in membranes. Modulates the host DNA repair mechanisms to promote degradation of nuclear viral cDNA in cells that are already productively infected in order to suppress immune sensing and proviral hyper-integration (superinfection). Manipulates PML-NBs and modulates SUMOylation of host BLM protein thereby enhancing its DNA-end processing activity toward viral unintegrated linear DNA. Also inhibits RAD52-mediated homologous repair of viral cDNA, preventing the generation of dead-end circular forms of single copies of the long terminal repeat and permitting sustained nucleolytic attack. This is Protein Vpu from Homo sapiens (Human).